We begin with the raw amino-acid sequence, 663 residues long: Translation factor GUF1, mitochondrial (663 aa).

A mitochondrion-targeting transit peptide spans 1–37; the sequence is MRGCLQSVRLLTTALGQSPRRPLPFAFRLPPNASRLF. The region spanning 65–245 is the tr-type G domain; sequence ERYRNFCIVA…TIVEQIPAPI (181 aa). Residues 74 to 81, 138 to 142, and 192 to 195 contribute to the GTP site; these read AHVDHGKS, DTPGH, and NKVD.

This sequence belongs to the TRAFAC class translation factor GTPase superfamily. Classic translation factor GTPase family. LepA subfamily.

The protein resides in the mitochondrion inner membrane. The catalysed reaction is GTP + H2O = GDP + phosphate + H(+). Functionally, promotes mitochondrial protein synthesis. May act as a fidelity factor of the translation reaction, by catalyzing a one-codon backward translocation of tRNAs on improperly translocated ribosomes. Binds to mitochondrial ribosomes in a GTP-dependent manner. This chain is Translation factor GUF1, mitochondrial, found in Uncinocarpus reesii (strain UAMH 1704).